We begin with the raw amino-acid sequence, 179 residues long: Large ribosomal subunit protein uL5 (179 aa).

The protein belongs to the universal ribosomal protein uL5 family. Part of the 50S ribosomal subunit; part of the 5S rRNA/L5/L18/L25 subcomplex. Contacts the 5S rRNA and the P site tRNA. Forms a bridge to the 30S subunit in the 70S ribosome.

Functionally, this is one of the proteins that bind and probably mediate the attachment of the 5S RNA into the large ribosomal subunit, where it forms part of the central protuberance. In the 70S ribosome it contacts protein S13 of the 30S subunit (bridge B1b), connecting the 2 subunits; this bridge is implicated in subunit movement. Contacts the P site tRNA; the 5S rRNA and some of its associated proteins might help stabilize positioning of ribosome-bound tRNAs. This is Large ribosomal subunit protein uL5 from Serratia proteamaculans (strain 568).